A 417-amino-acid polypeptide reads, in one-letter code: Phosphoglycerate kinase (417 aa).

(2R)-3-phosphoglycerate-binding residues include Val23, Asp24, Phe25, Asn26, Gln39, Arg40, Ser63, His64, Gly66, Arg67, Leu122, Arg123, His170, and Arg171. Position 214 (Gly214) interacts with ADP. Gly214 contributes to the CDP binding site. AMP contacts are provided by Ala215 and Lys216. ATP is bound at residue Ala215. Residue Ala215 coordinates Mg(2+). Asp219 serves as a coordination point for CDP. A Mg(2+)-binding site is contributed by Asp219. Lys220 provides a ligand contact to AMP. Lys220 is an ATP binding site. Residue Gly238 participates in ADP binding. Gly238 serves as a coordination point for CDP. Residues Gly239 and Gly313 each coordinate AMP. Residues Gly239 and Gly313 each contribute to the ATP site. The CDP site is built by Gly338, Ala340, and Phe343. An ADP-binding site is contributed by Phe343. Glu344 lines the AMP pocket. Residues Glu344, Asp375, and Thr376 each contribute to the ATP site. Position 375 (Asp375) interacts with Mg(2+).

The protein belongs to the phosphoglycerate kinase family. In terms of assembly, monomer. Mg(2+) is required as a cofactor.

Its subcellular location is the cytoplasm. The protein localises to the mitochondrion. The enzyme catalyses (2R)-3-phosphoglycerate + ATP = (2R)-3-phospho-glyceroyl phosphate + ADP. Its pathway is carbohydrate degradation; glycolysis; pyruvate from D-glyceraldehyde 3-phosphate: step 2/5. In terms of biological role, catalyzes one of the two ATP producing reactions in the glycolytic pathway via the reversible conversion of 1,3-diphosphoglycerate to 3-phosphoglycerate. Both L- and D- forms of purine and pyrimidine nucleotides can be used as substrates, but the activity is much lower on pyrimidines. Negatively regulates the biosynthesis of acetyl-CoA from pyruvate in the mitochondrion. The chain is Phosphoglycerate kinase (pgk1) from Hypocrea rufa (Trichoderma viride).